The sequence spans 110 residues: UPF0060 membrane protein Pcryo_1341 (110 aa).

Transmembrane regions (helical) follow at residues 7 to 27 (VGLFAITALAEIVGCYLPYLW), 33 to 53 (SIWLLVPSALSLVAFVWLLTL), 63 to 83 (AAYGGVYVTMAILWLWAVDGI), and 87 to 107 (TWDILGTSVALLGMAIIMFAP).

It belongs to the UPF0060 family.

It is found in the cell inner membrane. This chain is UPF0060 membrane protein Pcryo_1341, found in Psychrobacter cryohalolentis (strain ATCC BAA-1226 / DSM 17306 / VKM B-2378 / K5).